Reading from the N-terminus, the 277-residue chain is Large ribosomal subunit protein uL2 (277 aa).

Disordered regions lie at residues 36 to 55 and 213 to 277; these read PLPK…RHHG and WKGI…RKKK.

This sequence belongs to the universal ribosomal protein uL2 family. Part of the 50S ribosomal subunit. Forms a bridge to the 30S subunit in the 70S ribosome.

One of the primary rRNA binding proteins. Required for association of the 30S and 50S subunits to form the 70S ribosome, for tRNA binding and peptide bond formation. It has been suggested to have peptidyltransferase activity; this is somewhat controversial. Makes several contacts with the 16S rRNA in the 70S ribosome. The sequence is that of Large ribosomal subunit protein uL2 from Staphylococcus aureus (strain bovine RF122 / ET3-1).